The chain runs to 355 residues: Electron transfer flavoprotein subunit alpha, mitochondrial (355 aa).

295–323 (LYIAVGISGAIQHLAGMKDSKVIVAINKD) is a binding site for FAD.

The protein belongs to the ETF alpha-subunit/FixB family. Heterodimer of an alpha and a beta subunit. The cofactor is FAD.

It is found in the mitochondrion matrix. Its function is as follows. The electron transfer flavoprotein serves as a specific electron acceptor for several dehydrogenases, including five acyl-CoA dehydrogenases, glutaryl-CoA and sarcosine dehydrogenase. It transfers the electrons to the main mitochondrial respiratory chain via ETF-ubiquinone oxidoreductase (ETF dehydrogenase). The protein is Electron transfer flavoprotein subunit alpha, mitochondrial (etfa) of Dictyostelium discoideum (Social amoeba).